The sequence spans 75 residues: Microcin H47 (75 aa).

Residues 1–15 (MREITESQLRYISGA) constitute a propeptide that is removed on maturation. Residues 30–50 (AIVGALAGIPGGPLGVVVGAV) traverse the membrane as a helical segment.

Its subcellular location is the secreted. It localises to the host cell membrane. Bactericidal antibiotic. Active on bacteria phylogenetically related to the producing strain. The protein is Microcin H47 (mchB) of Escherichia coli O6:H1 (strain CFT073 / ATCC 700928 / UPEC).